A 464-amino-acid polypeptide reads, in one-letter code: MAVYNYDVVVLGSGPAGEGAAMNAAKAGRKVAMVDSRRQVGGNCTHLGTIPSKALRHSVKQIIQFNTNPMFRAIGEPRWFSFPDVLKNAEMVISKQVASRTSYYARNRVDVFFGTGSFADETSVNVVCSNGVVEKLVANQIIIATGSRPYRPADIDFSHKRIYDSDTILSLGHTPRKLIIYGAGVIGCEYASIFSGLGVLVELVDNRDQLLSFLDSEISQALSYHFSNNNVMVRHNEEYERVEGLDNGVILHLKSGKKIKADALLWCNGRTGNTDKLGLENIGLKANGRGQIEVDENYRTSVSNVYGAGDVIGWPSLASAAYDQGRSAAGSMVDNGSWRYVNDVPTGIYTIPEISSIGKNEHELTQAKVPYEVGKAFFKGMARAQISGERVGMLKILFHRETLEVLGVHCFGDQASEIVHIGQAIMSQPGEANTMKYFVNTTFNYPTMAEAYRVAAYDGLNRLF.

35 to 44 (DSRRQVGGNC) contributes to the FAD binding site.

This sequence belongs to the class-I pyridine nucleotide-disulfide oxidoreductase family. Requires FAD as cofactor.

The protein resides in the cytoplasm. It carries out the reaction NAD(+) + NADPH = NADH + NADP(+). In terms of biological role, conversion of NADPH, generated by peripheral catabolic pathways, to NADH, which can enter the respiratory chain for energy generation. The sequence is that of Soluble pyridine nucleotide transhydrogenase from Pseudomonas savastanoi pv. phaseolicola (strain 1448A / Race 6) (Pseudomonas syringae pv. phaseolicola (strain 1448A / Race 6)).